The following is a 551-amino-acid chain: Methionine--tRNA ligase (551 aa).

Positions 12 to 22 (PYANGPLHFGH) match the 'HIGH' region motif. The Zn(2+) site is built by C144, C147, C157, and C160. The 'KMSKS' region signature appears at 330–334 (QFSKS). K333 serves as a coordination point for ATP.

The protein belongs to the class-I aminoacyl-tRNA synthetase family. MetG type 1 subfamily. As to quaternary structure, monomer. Zn(2+) serves as cofactor.

It localises to the cytoplasm. The enzyme catalyses tRNA(Met) + L-methionine + ATP = L-methionyl-tRNA(Met) + AMP + diphosphate. In terms of biological role, is required not only for elongation of protein synthesis but also for the initiation of all mRNA translation through initiator tRNA(fMet) aminoacylation. The polypeptide is Methionine--tRNA ligase (metG) (Chlamydia pneumoniae (Chlamydophila pneumoniae)).